Here is a 1486-residue protein sequence, read N- to C-terminus: Chromosome partition protein MukB (1486 aa).

Residue 34 to 41 (GGNGAGKS) coordinates ATP. Coiled coils occupy residues 326-418 (LEAD…QYNQ), 444-480 (LETF…QAYQ), and 509-603 (RHLA…RAPV). The flexible hinge stretch occupies residues 666 to 783 (PGGSEDQRLN…EVPLFGRAAR (118 aa)). Coiled-coil stretches lie at residues 835 to 923 (EAEI…AKLE), 977 to 1115 (EMLS…TAKA), and 1209 to 1266 (VEAI…QNVS).

This sequence belongs to the SMC family. MukB subfamily. In terms of assembly, homodimerization via its hinge domain. Binds to DNA via its C-terminal region. Interacts, and probably forms a ternary complex, with MukE and MukF via its C-terminal region. The complex formation is stimulated by calcium or magnesium. Interacts with tubulin-related protein FtsZ.

The protein localises to the cytoplasm. It localises to the nucleoid. Plays a central role in chromosome condensation, segregation and cell cycle progression. Functions as a homodimer, which is essential for chromosome partition. Involved in negative DNA supercoiling in vivo, and by this means organize and compact chromosomes. May achieve or facilitate chromosome segregation by condensation DNA from both sides of a centrally located replisome during cell division. The polypeptide is Chromosome partition protein MukB (Escherichia coli O9:H4 (strain HS)).